The chain runs to 272 residues: MVDYTRIRLHGFNNLTKSLSFNIYDVCYAKTEAQRRAYIEYIDEEYNAERLTEILTNVAEIIGANVLNVARQDYDPQGASVTILISEGPVSPEEAEESAEARPGPLPDDVVAHLDKSHITVHTYPEMHPDKGVSTFRADIDVSTCGVISPLTALNYLIHSFDSDIVTMDYRVRGFTRDVEGHKHFIDHEINSIQNYLSEDTKERYQTLDVNVYQENIFHTKMILREFDLDNYLFGESSADLDEEEANTIRRHLRREMMEIFAGRNLPANQEV.

The active-site Schiff-base intermediate with substrate; via pyruvic acid is serine 117. Serine 117 carries the pyruvic acid (Ser); by autocatalysis modification. Histidine 122 (proton acceptor; for processing activity) is an active-site residue. The Proton donor; for catalytic activity role is filled by cysteine 145.

The protein belongs to the prokaryotic AdoMetDC family. Type 2 subfamily. Heterooctamer of four alpha and four beta chains arranged as a tetramer of alpha/beta heterodimers. Pyruvate is required as a cofactor. Post-translationally, is synthesized initially as an inactive proenzyme. Formation of the active enzyme involves a self-maturation process in which the active site pyruvoyl group is generated from an internal serine residue via an autocatalytic post-translational modification. Two non-identical subunits are generated from the proenzyme in this reaction, and the pyruvate is formed at the N-terminus of the alpha chain, which is derived from the carboxyl end of the proenzyme. The post-translation cleavage follows an unusual pathway, termed non-hydrolytic serinolysis, in which the side chain hydroxyl group of the serine supplies its oxygen atom to form the C-terminus of the beta chain, while the remainder of the serine residue undergoes an oxidative deamination to produce ammonia and the pyruvoyl group blocking the N-terminus of the alpha chain.

It catalyses the reaction S-adenosyl-L-methionine + H(+) = S-adenosyl 3-(methylsulfanyl)propylamine + CO2. The protein operates within amine and polyamine biosynthesis; S-adenosylmethioninamine biosynthesis; S-adenosylmethioninamine from S-adenosyl-L-methionine: step 1/1. Catalyzes the decarboxylation of S-adenosylmethionine to S-adenosylmethioninamine (dcAdoMet), the propylamine donor required for the synthesis of the polyamines spermine and spermidine from the diamine putrescine. The protein is S-adenosylmethionine decarboxylase proenzyme of Halorhodospira halophila (strain DSM 244 / SL1) (Ectothiorhodospira halophila (strain DSM 244 / SL1)).